A 335-amino-acid polypeptide reads, in one-letter code: Adenosine deaminase (335 aa).

The Zn(2+) site is built by histidine 12 and histidine 14. Substrate-binding residues include histidine 14 and aspartate 16. A Zn(2+)-binding site is contributed by histidine 197. Glutamate 200 acts as the Proton donor in catalysis. Residue aspartate 278 coordinates Zn(2+).

It belongs to the metallo-dependent hydrolases superfamily. Adenosine and AMP deaminases family. Adenosine deaminase subfamily. Zn(2+) serves as cofactor.

The enzyme catalyses adenosine + H2O + H(+) = inosine + NH4(+). It carries out the reaction 2'-deoxyadenosine + H2O + H(+) = 2'-deoxyinosine + NH4(+). Catalyzes the hydrolytic deamination of adenosine and 2-deoxyadenosine. The polypeptide is Adenosine deaminase (Clostridium botulinum (strain ATCC 19397 / Type A)).